We begin with the raw amino-acid sequence, 374 residues long: Succinyl-diaminopimelate desuccinylase (374 aa).

His-66 lines the Zn(2+) pocket. Asp-68 is a catalytic residue. Position 99 (Asp-99) interacts with Zn(2+). Residue Glu-133 is the Proton acceptor of the active site. Zn(2+)-binding residues include Glu-134, Glu-162, and His-348.

It belongs to the peptidase M20A family. DapE subfamily. In terms of assembly, homodimer. It depends on Zn(2+) as a cofactor. Co(2+) serves as cofactor.

The enzyme catalyses N-succinyl-(2S,6S)-2,6-diaminopimelate + H2O = (2S,6S)-2,6-diaminopimelate + succinate. It functions in the pathway amino-acid biosynthesis; L-lysine biosynthesis via DAP pathway; LL-2,6-diaminopimelate from (S)-tetrahydrodipicolinate (succinylase route): step 3/3. In terms of biological role, catalyzes the hydrolysis of N-succinyl-L,L-diaminopimelic acid (SDAP), forming succinate and LL-2,6-diaminopimelate (DAP), an intermediate involved in the bacterial biosynthesis of lysine and meso-diaminopimelic acid, an essential component of bacterial cell walls. The protein is Succinyl-diaminopimelate desuccinylase of Coxiella burnetii (strain CbuK_Q154) (Coxiella burnetii (strain Q154)).